The sequence spans 681 residues: Anaphase-promoting complex subunit 2 (681 aa).

This sequence belongs to the cullin family. As to quaternary structure, the APC/C is composed of at least 13 subunits: apc1, apc2, nuc2, apc4, apc5, cut9, apc8, apc10, apc11, hcn1, apc13, apc14 and apc15.

Its function is as follows. Component of the anaphase-promoting complex/cyclosome (APC/C), a cell cycle-regulated E3 ubiquitin-protein ligase complex that controls progression through mitosis and the G1 phase of the cell cycle. The APC/C is thought to confer substrate specificity and, in the presence of ubiquitin-conjugating E2 enzymes, it catalyzes the formation of protein-ubiquitin conjugates that are subsequently degraded by the 26S proteasome. This chain is Anaphase-promoting complex subunit 2 (apc2), found in Schizosaccharomyces pombe (strain 972 / ATCC 24843) (Fission yeast).